A 217-amino-acid chain; its full sequence is Glutathione S-transferase B (217 aa).

A GST N-terminal domain is found at 1-87 (PMTLGYWNIR…YIARKHNLCG (87 aa)). Residues 6-7 (YW), 45-49 (WLNEK), 58-59 (NL), and 71-72 (QS) each bind glutathione. The 119-residue stretch at 89 to 207 (TEEETIRMDI…KSSRFLPKPL (119 aa)) folds into the GST C-terminal domain. Y115 lines the substrate pocket.

The protein belongs to the GST superfamily. Mu family. In terms of assembly, homodimer.

The protein resides in the cytoplasm. It catalyses the reaction RX + glutathione = an S-substituted glutathione + a halide anion + H(+). It carries out the reaction prostaglandin A2 + glutathione = prostaglandin A2-S-(R)-glutathione. The catalysed reaction is prostaglandin J2 + glutathione = prostaglandin J2-S-(R)-glutathione. The enzyme catalyses prostaglandin J2 + glutathione = prostaglandin J2-S-(S)-glutathione. It catalyses the reaction prostaglandin A2 + glutathione = prostaglandin A2-S-(S)-glutathione. It carries out the reaction 11(S)-hydroxy-14(S),15(S)-epoxy-(5Z,8Z,12E)-eicosatrienoate + glutathione = (11S,15S)-dihydroxy-14(R)-S-glutathionyl-(5Z,8Z,12E)-eicosatrienoate. Its function is as follows. Conjugation of reduced glutathione to a wide number of exogenous and endogenous hydrophobic electrophiles. Involved in the formation of glutathione conjugates of both prostaglandin A2 (PGA2) and prostaglandin J2 (PGJ2). Participates in the formation of novel hepoxilin regioisomers. The chain is Glutathione S-transferase B (GSTM1) from Cavia porcellus (Guinea pig).